A 119-amino-acid polypeptide reads, in one-letter code: NADH-quinone oxidoreductase subunit A (119 aa).

3 consecutive transmembrane segments (helical) span residues 7-27, 63-83, and 88-108; these read FPVLLFILVGIGVGLVPMFLG, LIAILFILFDLETAFLFPWGV, and IGWLGYASMVIFLLEFIVGFV.

This sequence belongs to the complex I subunit 3 family. As to quaternary structure, NDH-1 is composed of 14 different subunits. Subunits NuoA, H, J, K, L, M, N constitute the membrane sector of the complex.

It is found in the cell inner membrane. It catalyses the reaction a quinone + NADH + 5 H(+)(in) = a quinol + NAD(+) + 4 H(+)(out). Functionally, NDH-1 shuttles electrons from NADH, via FMN and iron-sulfur (Fe-S) centers, to quinones in the respiratory chain. The immediate electron acceptor for the enzyme in this species is believed to be ubiquinone. Couples the redox reaction to proton translocation (for every two electrons transferred, four hydrogen ions are translocated across the cytoplasmic membrane), and thus conserves the redox energy in a proton gradient. The protein is NADH-quinone oxidoreductase subunit A of Polynucleobacter necessarius subsp. necessarius (strain STIR1).